Reading from the N-terminus, the 276-residue chain is Large ribosomal subunit protein uL2 (276 aa).

The disordered stretch occupies residues 222-276 (GVAMNPIDHPLGGGEGRSSGGRHPVSPWGMPTKGYKTRDRKKASSKLIIKRRGQK). Residues 259–276 (RDRKKASSKLIIKRRGQK) are compositionally biased toward basic residues.

Belongs to the universal ribosomal protein uL2 family. Part of the 50S ribosomal subunit. Forms a bridge to the 30S subunit in the 70S ribosome.

In terms of biological role, one of the primary rRNA binding proteins. Required for association of the 30S and 50S subunits to form the 70S ribosome, for tRNA binding and peptide bond formation. It has been suggested to have peptidyltransferase activity; this is somewhat controversial. Makes several contacts with the 16S rRNA in the 70S ribosome. The chain is Large ribosomal subunit protein uL2 from Nitratidesulfovibrio vulgaris (strain ATCC 29579 / DSM 644 / CCUG 34227 / NCIMB 8303 / VKM B-1760 / Hildenborough) (Desulfovibrio vulgaris).